Here is a 201-residue protein sequence, read N- to C-terminus: L-rhamnose-binding lectin SML (201 aa).

Disulfide bonds link Cys-10–Cys-40, Cys-20–Cys-99, Cys-54–Cys-86, Cys-67–Cys-73, Cys-108–Cys-138, Cys-117–Cys-195, Cys-152–Cys-182, and Cys-163–Cys-169. SUEL-type lectin domains follow at residues 18–100 (LSCD…YNCF) and 107–196 (TCEH…YVCQ). An N-linked (GlcNAc...) asparagine glycan is attached at Asn-168.

Homodimer; non-covalently linked.

In terms of biological role, rhamnose-binding lectin. Also binds melibiose, raffinose, D-galactose, L-arabinose, D-fucose, maltose and D-glucose with decreasing affinity. Does not bind D-arabinose, L-fucose, lactose, xylose or 2-deoxy-D-galactose. Shows strong hemagglutinating activity against rabbit erythrocytes. In Scomberomorus niphonius (Japanese Spanish mackerel), this protein is L-rhamnose-binding lectin SML.